Here is a 301-residue protein sequence, read N- to C-terminus: NADH-cytochrome b5 reductase 3 (301 aa).

Residue glycine 2 is the site of N-myristoyl glycine attachment. An FAD-binding FR-type domain is found at 40-152 (DIKYPLRLID…RGPNGLLVYQ (113 aa)). Lysine 42 carries the N6-acetyllysine modification. Tyrosine 43 carries the post-translational modification Phosphotyrosine. Lysine 50 carries the N6-acetyllysine modification. 6 residues coordinate FAD: arginine 92, proline 93, tyrosine 94, valine 109, lysine 111, and phenylalanine 114. An N6-acetyllysine modification is found at lysine 120. FAD-binding residues include lysine 126, methionine 127, serine 128, and threonine 185.

This sequence belongs to the flavoprotein pyridine nucleotide cytochrome reductase family. As to quaternary structure, component of a complex composed of cytochrome b5, NADH-cytochrome b5 reductase (CYB5R3) and MTARC2. Interacts with MTLN; the interaction is required to maintain cellular lipid composition and leads to stimulation of mitochondrial respiratory complex I activity. FAD is required as a cofactor.

The protein resides in the endoplasmic reticulum membrane. Its subcellular location is the mitochondrion outer membrane. The catalysed reaction is 2 Fe(III)-[cytochrome b5] + NADH = 2 Fe(II)-[cytochrome b5] + NAD(+) + H(+). In terms of biological role, catalyzes the reduction of two molecules of cytochrome b5 using NADH as the electron donor. The sequence is that of NADH-cytochrome b5 reductase 3 from Mus musculus (Mouse).